A 168-amino-acid chain; its full sequence is Protein C2-DOMAIN ABA-RELATED 1 (168 aa).

The residue at position 1 (Met1) is an N-acetylmethionine. Positions 1 to 104 (MENLVGLLRI…EAIKFAHQLG (104 aa)) constitute a C2 domain. Residues Arg21, Asp22, Asp27, Asp73, Tyr74, Asp75, and Asp81 each coordinate Ca(2+).

The protein belongs to the plant CAR protein family. Dimers and oligomers. Binds to PYR/PYL/RCAR abscisic acid intracellular receptors in an ABA-independent manner, both at the plasma membrane and in the nucleus. Interacts directly with PYR1, PYL1, PYL4, PYL6 and PYL8. Binds phospholipids in a Ca(2+)-dependent manner. Ca(2+) is required as a cofactor. As to expression, expressed in roots.

The protein resides in the cell membrane. Its subcellular location is the nucleus. Its function is as follows. Stimulates the GTPase/ATPase activities of Obg-like ATPases. Mediates the transient calcium-dependent interaction of PYR/PYL/RCAR abscisic acid (ABA) receptors with the plasma membrane and thus regulates ABA sensitivity. Binds liposomes in the absence of exogenous Ca(2+), but this activity is enhanced in the presence of Ca(2+) and generates membrane curvature. This chain is Protein C2-DOMAIN ABA-RELATED 1, found in Arabidopsis thaliana (Mouse-ear cress).